A 312-amino-acid chain; its full sequence is uncharacterized protein (312 aa).

This is an uncharacterized protein from Escherichia coli (strain K12).